A 202-amino-acid chain; its full sequence is ATP-dependent Clp protease proteolytic subunit (202 aa).

Catalysis depends on serine 101, which acts as the Nucleophile. Residue histidine 126 is part of the active site.

It belongs to the peptidase S14 family. Component of the chloroplastic Clp protease core complex.

It localises to the plastid. The protein resides in the chloroplast stroma. The catalysed reaction is Hydrolysis of proteins to small peptides in the presence of ATP and magnesium. alpha-casein is the usual test substrate. In the absence of ATP, only oligopeptides shorter than five residues are hydrolyzed (such as succinyl-Leu-Tyr-|-NHMec, and Leu-Tyr-Leu-|-Tyr-Trp, in which cleavage of the -Tyr-|-Leu- and -Tyr-|-Trp bonds also occurs).. Cleaves peptides in various proteins in a process that requires ATP hydrolysis. Has a chymotrypsin-like activity. Plays a major role in the degradation of misfolded proteins. The protein is ATP-dependent Clp protease proteolytic subunit of Platanus occidentalis (Sycamore).